Consider the following 360-residue polypeptide: Phospho-N-acetylmuramoyl-pentapeptide-transferase (360 aa).

Helical transmembrane passes span I27–W47, T73–L93, S94–V114, W132–G152, V168–S188, G199–T219, A236–F256, V263–L283, F288–V308, and V338–K358.

Belongs to the glycosyltransferase 4 family. MraY subfamily. Mg(2+) is required as a cofactor.

The protein localises to the cell inner membrane. The catalysed reaction is UDP-N-acetyl-alpha-D-muramoyl-L-alanyl-gamma-D-glutamyl-meso-2,6-diaminopimeloyl-D-alanyl-D-alanine + di-trans,octa-cis-undecaprenyl phosphate = di-trans,octa-cis-undecaprenyl diphospho-N-acetyl-alpha-D-muramoyl-L-alanyl-D-glutamyl-meso-2,6-diaminopimeloyl-D-alanyl-D-alanine + UMP. It functions in the pathway cell wall biogenesis; peptidoglycan biosynthesis. Its function is as follows. Catalyzes the initial step of the lipid cycle reactions in the biosynthesis of the cell wall peptidoglycan: transfers peptidoglycan precursor phospho-MurNAc-pentapeptide from UDP-MurNAc-pentapeptide onto the lipid carrier undecaprenyl phosphate, yielding undecaprenyl-pyrophosphoryl-MurNAc-pentapeptide, known as lipid I. The chain is Phospho-N-acetylmuramoyl-pentapeptide-transferase from Pectobacterium carotovorum subsp. carotovorum (strain PC1).